The chain runs to 506 residues: Maturase K (506 aa).

Belongs to the intron maturase 2 family. MatK subfamily.

It localises to the plastid. The protein resides in the chloroplast. Usually encoded in the trnK tRNA gene intron. Probably assists in splicing its own and other chloroplast group II introns. In Trifolium incarnatum (Crimson clover), this protein is Maturase K.